The following is a 331-amino-acid chain: Phosphate acyltransferase (331 aa).

Belongs to the PlsX family. In terms of assembly, homodimer. Probably interacts with PlsY.

Its subcellular location is the cytoplasm. It carries out the reaction a fatty acyl-[ACP] + phosphate = an acyl phosphate + holo-[ACP]. It participates in lipid metabolism; phospholipid metabolism. Its function is as follows. Catalyzes the reversible formation of acyl-phosphate (acyl-PO(4)) from acyl-[acyl-carrier-protein] (acyl-ACP). This enzyme utilizes acyl-ACP as fatty acyl donor, but not acyl-CoA. This is Phosphate acyltransferase from Ureaplasma urealyticum serovar 10 (strain ATCC 33699 / Western).